The chain runs to 461 residues: Cysteine--tRNA ligase (461 aa).

Residue Cys28 coordinates Zn(2+). Positions 30 to 40 match the 'HIGH' region motif; it reads ITVYDLCHIGH. Zn(2+) is bound by residues Cys209, His234, and Glu238. The short motif at 266–270 is the 'KMSKS' region element; it reads KMSKS. Residue Lys269 coordinates ATP.

It belongs to the class-I aminoacyl-tRNA synthetase family. Monomer. The cofactor is Zn(2+).

The protein resides in the cytoplasm. It catalyses the reaction tRNA(Cys) + L-cysteine + ATP = L-cysteinyl-tRNA(Cys) + AMP + diphosphate. The protein is Cysteine--tRNA ligase of Klebsiella pneumoniae (strain 342).